Here is a 445-residue protein sequence, read N- to C-terminus: Probable D-serine dehydratase (445 aa).

Position 116 is an N6-(pyridoxal phosphate)lysine (Lys-116).

The protein belongs to the serine/threonine dehydratase family. DsdA subfamily. The cofactor is pyridoxal 5'-phosphate.

The catalysed reaction is D-serine = pyruvate + NH4(+). In Bacillus mycoides (strain KBAB4) (Bacillus weihenstephanensis), this protein is Probable D-serine dehydratase.